The following is a 150-amino-acid chain: 3-hydroxyacyl-[acyl-carrier-protein] dehydratase FabZ (150 aa).

The active site involves His54.

This sequence belongs to the thioester dehydratase family. FabZ subfamily.

The protein resides in the cytoplasm. It catalyses the reaction a (3R)-hydroxyacyl-[ACP] = a (2E)-enoyl-[ACP] + H2O. Its function is as follows. Involved in unsaturated fatty acids biosynthesis. Catalyzes the dehydration of short chain beta-hydroxyacyl-ACPs and long chain saturated and unsaturated beta-hydroxyacyl-ACPs. This is 3-hydroxyacyl-[acyl-carrier-protein] dehydratase FabZ from Psychromonas ingrahamii (strain DSM 17664 / CCUG 51855 / 37).